We begin with the raw amino-acid sequence, 452 residues long: Glutamyl-tRNA(Gln) amidotransferase subunit A (452 aa).

Catalysis depends on charge relay system residues K56 and S131. S155 (acyl-ester intermediate) is an active-site residue.

The protein belongs to the amidase family. GatA subfamily. Heterotrimer of A, B and C subunits.

The enzyme catalyses L-glutamyl-tRNA(Gln) + L-glutamine + ATP + H2O = L-glutaminyl-tRNA(Gln) + L-glutamate + ADP + phosphate + H(+). Its function is as follows. Allows the formation of correctly charged Gln-tRNA(Gln) through the transamidation of misacylated Glu-tRNA(Gln) in organisms which lack glutaminyl-tRNA synthetase. The reaction takes place in the presence of glutamine and ATP through an activated gamma-phospho-Glu-tRNA(Gln). This Campylobacter hominis (strain ATCC BAA-381 / DSM 21671 / CCUG 45161 / LMG 19568 / NCTC 13146 / CH001A) protein is Glutamyl-tRNA(Gln) amidotransferase subunit A.